Here is a 264-residue protein sequence, read N- to C-terminus: Type III pantothenate kinase (264 aa).

6 to 13 lines the ATP pocket; that stretch reads DVGNTNIK. Substrate is bound at residue 108–111; the sequence is GSDR. Asp-110 functions as the Proton acceptor in the catalytic mechanism. Thr-134 is an ATP binding site.

Belongs to the type III pantothenate kinase family. As to quaternary structure, homodimer. NH4(+) is required as a cofactor. It depends on K(+) as a cofactor.

It is found in the cytoplasm. It catalyses the reaction (R)-pantothenate + ATP = (R)-4'-phosphopantothenate + ADP + H(+). It functions in the pathway cofactor biosynthesis; coenzyme A biosynthesis; CoA from (R)-pantothenate: step 1/5. In terms of biological role, catalyzes the phosphorylation of pantothenate (Pan), the first step in CoA biosynthesis. The sequence is that of Type III pantothenate kinase from Ehrlichia canis (strain Jake).